The primary structure comprises 157 residues: 2-C-methyl-D-erythritol 2,4-cyclodiphosphate synthase (157 aa).

Asp-8, His-10, and His-42 together coordinate a divalent metal cation. 4-CDP-2-C-methyl-D-erythritol 2-phosphate is bound at residue 8–10 (DVH). 4-CDP-2-C-methyl-D-erythritol 2-phosphate-binding positions include 56-58 (DIG), 132-135 (STSE), Phe-139, and Arg-142.

Belongs to the IspF family. As to quaternary structure, homotrimer. A divalent metal cation serves as cofactor.

The catalysed reaction is 4-CDP-2-C-methyl-D-erythritol 2-phosphate = 2-C-methyl-D-erythritol 2,4-cyclic diphosphate + CMP. The protein operates within isoprenoid biosynthesis; isopentenyl diphosphate biosynthesis via DXP pathway; isopentenyl diphosphate from 1-deoxy-D-xylulose 5-phosphate: step 4/6. Its function is as follows. Involved in the biosynthesis of isopentenyl diphosphate (IPP) and dimethylallyl diphosphate (DMAPP), two major building blocks of isoprenoid compounds. Catalyzes the conversion of 4-diphosphocytidyl-2-C-methyl-D-erythritol 2-phosphate (CDP-ME2P) to 2-C-methyl-D-erythritol 2,4-cyclodiphosphate (ME-CPP) with a corresponding release of cytidine 5-monophosphate (CMP). The polypeptide is 2-C-methyl-D-erythritol 2,4-cyclodiphosphate synthase (Dehalococcoides mccartyi (strain ATCC BAA-2266 / KCTC 15142 / 195) (Dehalococcoides ethenogenes (strain 195))).